Consider the following 60-residue polypeptide: MGDGMRRLSRAHRCRIGCFEPGLRVRMVGISSLKDIDGAVVLNSDKHLDPHWRRQEPRMA.

This is an uncharacterized protein from Emericella nidulans (strain FGSC A4 / ATCC 38163 / CBS 112.46 / NRRL 194 / M139) (Aspergillus nidulans).